Consider the following 510-residue polypeptide: Nucleosome assembly protein 1-like 3 (510 aa).

Disordered stretches follow at residues 1–99 (MAEA…LGTN) and 161–311 (PTEE…KRED). Residues 35–74 (SSSSSSSTSGSSSSSSTSGSSSSSGSGSSSSSSGSGSTSS) are compositionally biased toward low complexity. The segment covering 161–182 (PTEEECEWNSEDEEFSSDEEVQ) has biased composition (acidic residues). Basic and acidic residues-rich tracts occupy residues 200–229 (PKEN…EVPK), 235–246 (KAEEKADSKDCM), and 254–300 (EDPK…VDLK).

This sequence belongs to the nucleosome assembly protein (NAP) family.

The protein resides in the nucleus. This Pongo abelii (Sumatran orangutan) protein is Nucleosome assembly protein 1-like 3 (NAP1L3).